Reading from the N-terminus, the 333-residue chain is Probable HTH-type transcriptional repressor ExuR (333 aa).

In terms of domain architecture, HTH lacI-type spans 2-56 (VTIKDIAKLANVSHTTVSRALNNSPYIKEHTKKKILELAEQLNYTPNVNAKSLAM). The H-T-H motif DNA-binding region spans 4-23 (IKDIAKLANVSHTTVSRALN).

In terms of biological role, transcriptional repressor for the exu locus which is required for galacturonate utilization. This chain is Probable HTH-type transcriptional repressor ExuR (exuR), found in Bacillus subtilis (strain 168).